We begin with the raw amino-acid sequence, 647 residues long: MIKITFPDGAIREFESGITTFEIAQSISNSLAKKALAGKFNGQLIDTTRAIEEDGSIEIVTPDHEDALGVLRHSAAHLFAQAAKRLFPDLCLGVGPAIQDGFYYDTDNKSGQISNDDLPRVEEEMKKIVKENHPCIREEISKEEALELFKDDPYKVELISEHAEDGLTVYRQGEFVDLCRGPHVPSTGRIQVFHLLNVAGAYWRGNSDNAMMQRVYGTAWFDKKDLKAYLKRREEAKERDHRKLGKELDLFMVNPEVGQGLPFWLPNGATIRRELERYIVDKEIASGYQHVYTPPMASVEFYKTSGHWDHYREDMFPTMDMGDGEEFVLRPMNCPHHIEVYKHHVHSYRELPIRIAELGMMHRYEKSGALTGLQRVREMTLNDAHIFVTPEQIKDEFLKALNLIAEIYEDFNLTDYRFRLSYRDPEDKHKYYDNDEMWENAQAMLKEAMDDFGLDYFEAEGEAAFYGPKLDIQVKTALGNEETLSTIQLDFLLPERFDLKYIGADGEEHRPIMIHRGGISTMERFTAILIETYKGAFPTWLAPQQVSVIPISNEAHIDYAWEVARVLKDRGIRAEVDDRNEKMQYKIRAAQTQKIPYQLIVGDKEMEEKAVNVRRYGSKATETKSIEEFVESILADIARKSRPDEVK.

One can recognise a TGS domain in the interval 1-61; the sequence is MIKITFPDGA…EEDGSIEIVT (61 aa). The catalytic stretch occupies residues 240 to 538; that stretch reads DHRKLGKELD…LIETYKGAFP (299 aa). Cys334, His385, and His515 together coordinate Zn(2+).

The protein belongs to the class-II aminoacyl-tRNA synthetase family. In terms of assembly, homodimer. Zn(2+) serves as cofactor.

Its subcellular location is the cytoplasm. The catalysed reaction is tRNA(Thr) + L-threonine + ATP = L-threonyl-tRNA(Thr) + AMP + diphosphate + H(+). Functionally, catalyzes the attachment of threonine to tRNA(Thr) in a two-step reaction: L-threonine is first activated by ATP to form Thr-AMP and then transferred to the acceptor end of tRNA(Thr). Also edits incorrectly charged L-seryl-tRNA(Thr). The protein is Threonine--tRNA ligase of Streptococcus agalactiae serotype III (strain NEM316).